A 162-amino-acid polypeptide reads, in one-letter code: Disulfide bond formation protein B (162 aa).

Residues 1 to 8 (MTPLFRKA) are Cytoplasmic-facing. A helical membrane pass occupies residues 9-25 (VWLLFAVSVCAFAGSLA). Topologically, residues 26 to 43 (AQYVLGMEPCVLCISQRL) are periplasmic. Residues Cys35 and Cys38 are joined by a disulfide bond. A helical membrane pass occupies residues 44 to 60 (CVLATALCAAIVLMCRP). The Cytoplasmic portion of the chain corresponds to 61-67 (RRKAGGL). Residues 68–85 (FGAVFISIPAVTGISVAA) form a helical membrane-spanning segment. The Periplasmic segment spans residues 86–141 (YQLWLQSLPPGTAPSCGAPWTFRLKGWPLFDWFEPVVRGFGNCAEPDYLLGVALPV). An intrachain disulfide couples Cys101 to Cys128. A helical membrane pass occupies residues 142–160 (WSVAYFLAVALTVWWAWAR). At 161-162 (AK) the chain is on the cytoplasmic side.

This sequence belongs to the DsbB family.

It is found in the cell inner membrane. In terms of biological role, required for disulfide bond formation in some periplasmic proteins. Acts by oxidizing the DsbA protein. This chain is Disulfide bond formation protein B, found in Neisseria meningitidis serogroup A / serotype 4A (strain DSM 15465 / Z2491).